The sequence spans 235 residues: Probable transcriptional regulatory protein Ccur92_05350 (235 aa).

This sequence belongs to the TACO1 family.

The protein localises to the cytoplasm. This chain is Probable transcriptional regulatory protein Ccur92_05350, found in Campylobacter curvus (strain 525.92).